The sequence spans 700 residues: Interleukin-1 receptor accessory protein-like 1-B (700 aa).

Residues 1–18 form the signal peptide; sequence MRSRVPLQILLYAAVIRS. Topologically, residues 19 to 357 are extracellular; sequence LKVVSKRGSV…QLSRRELMYT (339 aa). The region spanning 32-134 is the Ig-like C2-type 1 domain; it reads TDWSVDYLRY…YCMKVSMALT (103 aa). C53 and C118 form a disulfide bridge. Residues N63, N122, N138, N213, N264, and N331 are each glycosylated (N-linked (GlcNAc...) asparagine). Ig-like C2-type domains lie at 143 to 232 and 242 to 350; these read CYNS…TELT and PKIL…IQLS. C164 and C216 are oxidised to a cystine. C267 and C334 are joined by a disulfide. Residues 358-378 form a helical membrane-spanning segment; that stretch reads VELAGGLGAILLMLIFLVSLY. At 379–700 the chain is on the cytoplasmic side; the sequence is KCYRIELMLF…RETSISSVIW (322 aa). The region spanning 403–559 is the TIR domain; the sequence is KDYDAYVSYT…RFWKQLQYEM (157 aa). Residue E491 is part of the active site. The required for synaptic vesicle accumulation during synaptogenesis stretch occupies residues 564–700; that stretch reads PEPKLSHEQV…RETSISSVIW (137 aa).

The protein belongs to the interleukin-1 receptor family.

It localises to the cell membrane. The protein resides in the cytoplasm. The catalysed reaction is NAD(+) + H2O = ADP-D-ribose + nicotinamide + H(+). In terms of biological role, may regulate secretion and presynaptic differentiation through inhibition of the activity of N-type voltage-gated calcium channel. During presynaptic differentiation may regulate both synaptic vesicle accumulation in axon terminals and subsequent axon terminal remodeling. The protein is Interleukin-1 receptor accessory protein-like 1-B (il1rapl1b) of Danio rerio (Zebrafish).